The chain runs to 280 residues: Acetyl-coenzyme A carboxylase carboxyl transferase subunit beta (280 aa).

The region spanning 26–280 (LWQKCPRCGE…TKLLAWHSQK (255 aa)) is the CoA carboxyltransferase N-terminal domain. Residues C30, C33, C49, and C52 each coordinate Zn(2+). A C4-type zinc finger spans residues 30-52 (CPRCGEIIFNKELEKNFKVCPKC).

The protein belongs to the AccD/PCCB family. In terms of assembly, acetyl-CoA carboxylase is a heterohexamer composed of biotin carboxyl carrier protein (AccB), biotin carboxylase (AccC) and two subunits each of ACCase subunit alpha (AccA) and ACCase subunit beta (AccD). The cofactor is Zn(2+).

The protein resides in the cytoplasm. The catalysed reaction is N(6)-carboxybiotinyl-L-lysyl-[protein] + acetyl-CoA = N(6)-biotinyl-L-lysyl-[protein] + malonyl-CoA. It functions in the pathway lipid metabolism; malonyl-CoA biosynthesis; malonyl-CoA from acetyl-CoA: step 1/1. Component of the acetyl coenzyme A carboxylase (ACC) complex. Biotin carboxylase (BC) catalyzes the carboxylation of biotin on its carrier protein (BCCP) and then the CO(2) group is transferred by the transcarboxylase to acetyl-CoA to form malonyl-CoA. The polypeptide is Acetyl-coenzyme A carboxylase carboxyl transferase subunit beta (Carboxydothermus hydrogenoformans (strain ATCC BAA-161 / DSM 6008 / Z-2901)).